We begin with the raw amino-acid sequence, 622 residues long: 1,4-alpha-glucan branching enzyme GlgB (622 aa).

Catalysis depends on aspartate 306, which acts as the Nucleophile. Glutamate 358 acts as the Proton donor in catalysis. The segment at 581-606 (YGGSNVGNRGAVHSDPVEKHGHSHSL) is disordered.

The protein belongs to the glycosyl hydrolase 13 family. GlgB subfamily. Monomer.

The enzyme catalyses Transfers a segment of a (1-&gt;4)-alpha-D-glucan chain to a primary hydroxy group in a similar glucan chain.. It functions in the pathway glycan biosynthesis; glycogen biosynthesis. In terms of biological role, catalyzes the formation of the alpha-1,6-glucosidic linkages in glycogen by scission of a 1,4-alpha-linked oligosaccharide from growing alpha-1,4-glucan chains and the subsequent attachment of the oligosaccharide to the alpha-1,6 position. This is 1,4-alpha-glucan branching enzyme GlgB from Salinibacter ruber (strain DSM 13855 / M31).